A 334-amino-acid chain; its full sequence is Serpentine receptor class alpha-11 (334 aa).

Over 1-23 (MTTNNPVCASDAHMEMYSSKLYT) the chain is Extracellular. The helical transmembrane segment at 24 to 44 (SALFLNLIIATTSMILTGFAI) threads the bilayer. Residues 45–57 (QKLFMESIINIST) are Cytoplasmic-facing. The helical transmembrane segment at 58–80 (RMFLFCGLMCCSLHQTAYIVLRI) threads the bilayer. The Extracellular portion of the chain corresponds to 81-105 (QVIYQVFFKLSEPCNLYYPAIDCKY). The chain crosses the membrane as a helical span at residues 106–126 (VTFSLVAGNTGMIFIQSAMTI). Over 127-145 (DRIFATIFPKLWPKLKYWP) the chain is Cytoplasmic. Residues 146-166 (GVVLSILMIACNYANVQIIFW) form a helical membrane-spanning segment. The Extracellular portion of the chain corresponds to 167-191 (GDPLTEYVPTCGQFPSKSVNRFQTF). Residues 192–212 (LAIALYMSIAHMVINVIILYI) traverse the membrane as a helical segment. Over 213 to 239 (NVLQDRQQSKSFNVNQRYQSREALKSS) the chain is Cytoplasmic. The helical transmembrane segment at 240–260 (QAIFFLSMSQFFACLIYSVFT) threads the bilayer. Residues 261–277 (KVFLEFQLNLSPLQSGL) are Extracellular-facing. A helical transmembrane segment spans residues 278 to 298 (VLALSYTTPYACIAIPSLIIF). The Cytoplasmic segment spans residues 299–334 (TFRFIKNQRLRNINELRSQTETGDECMRKIAKIWEK).

The protein belongs to the nematode receptor-like protein sra family. As to expression, expressed in interneurons AIY and AVB in L1 larvae. In adults, strong expression is seen in AIY and AIA but only weak expression in AVB.

The protein localises to the membrane. A G protein-coupled receptor required for olfactory imprinting a requisite in ordorant response such as benzaldehyde and isoamylalcohol. This is Serpentine receptor class alpha-11 (sra-11) from Caenorhabditis elegans.